The sequence spans 205 residues: Small ribosomal subunit protein uS4 (205 aa).

Over residues 1-12 (MSKRIQAKHKLD) the composition is skewed to basic residues. Residues 1–49 (MSKRIQAKHKLDRRMGQNIWGRPKSPVNRREYGPGQHGQRRKGKMSDFG) form a disordered region. Residues 94 to 155 (RRLDAVVYRA…SSRQLEIVIV (62 aa)) form the S4 RNA-binding domain.

Belongs to the universal ribosomal protein uS4 family. Part of the 30S ribosomal subunit. Contacts protein S5. The interaction surface between S4 and S5 is involved in control of translational fidelity.

One of the primary rRNA binding proteins, it binds directly to 16S rRNA where it nucleates assembly of the body of the 30S subunit. Its function is as follows. With S5 and S12 plays an important role in translational accuracy. The sequence is that of Small ribosomal subunit protein uS4 from Methylobacterium radiotolerans (strain ATCC 27329 / DSM 1819 / JCM 2831 / NBRC 15690 / NCIMB 10815 / 0-1).